Reading from the N-terminus, the 505-residue chain is Photosystem II CP47 reaction center protein (505 aa).

The Cytoplasmic portion of the chain corresponds to 1-19 (GLPWYRVHTVLINDPGRLI). Residues histidine 8, histidine 22, histidine 25, histidine 99, and histidine 113 each contribute to the chlorophyll a site. A helical membrane pass occupies residues 20-35 (AAHLMHTALVAGWAGS). Over 36–99 (MALYELATFD…WSFEGVALAH (64 aa)) the chain is Lumenal. A helical transmembrane segment spans residues 100–114 (IVLSGLLFLAACWHW). Topologically, residues 115–138 (VYWDLELFRDPRTGEPALDLPKMF) are cytoplasmic. The helical transmembrane segment at 139-155 (GIHLFLAGLLCFGFGAF) threads the bilayer. Chlorophyll a contacts are provided by histidine 141, histidine 156, histidine 200, histidine 201, and histidine 215. Residues 156-201 (HLTGLFGPGMWVSDPYGLTGSVQPVAPEWGPDGFNPYNPGGVVAHH) lie on the Lumenal side of the membrane. The chain crosses the membrane as a helical span at residues 202-217 (IAAGIVGIIAGLFHIL). Topologically, residues 218 to 235 (VRPPQRLYKALRMGNIET) are cytoplasmic. Residues 236-251 (VLSSSIAAVFFAAFVV) form a helical membrane-spanning segment. Topologically, residues 252–455 (AGTMWYGSAT…PRGWFTFAHA (204 aa)) are lumenal. Chlorophyll a is bound by residues histidine 454, histidine 465, and histidine 468. A helical transmembrane segment spans residues 456–471 (VFALLFFFGHIWHGAR). The Cytoplasmic segment spans residues 472–505 (TLFRDVFSGIDPELSPEQVEWGFYQKVGDVTTRK).

Belongs to the PsbB/PsbC family. PsbB subfamily. In terms of assembly, PSII is composed of 1 copy each of membrane proteins PsbA, PsbB, PsbC, PsbD, PsbE, PsbF, PsbH, PsbI, PsbJ, PsbK, PsbL, PsbM, PsbT, PsbX, PsbY, PsbZ, Psb30/Ycf12, peripheral proteins PsbO, CyanoQ (PsbQ), PsbU, PsbV and a large number of cofactors. It forms dimeric complexes. Requires Binds multiple chlorophylls. PSII binds additional chlorophylls, carotenoids and specific lipids. as cofactor.

It localises to the cellular thylakoid membrane. Functionally, one of the components of the core complex of photosystem II (PSII). It binds chlorophyll and helps catalyze the primary light-induced photochemical processes of PSII. PSII is a light-driven water:plastoquinone oxidoreductase, using light energy to abstract electrons from H(2)O, generating O(2) and a proton gradient subsequently used for ATP formation. This chain is Photosystem II CP47 reaction center protein, found in Thermostichus vulcanus (Synechococcus vulcanus).